The primary structure comprises 399 residues: Nicotinate phosphoribosyltransferase 1 (399 aa).

Histidine 224 carries the post-translational modification Phosphohistidine; by autocatalysis.

The protein belongs to the NAPRTase family. Transiently phosphorylated on a His residue during the reaction cycle. Phosphorylation strongly increases the affinity for substrates and increases the rate of nicotinate D-ribonucleotide production. Dephosphorylation regenerates the low-affinity form of the enzyme, leading to product release.

The enzyme catalyses nicotinate + 5-phospho-alpha-D-ribose 1-diphosphate + ATP + H2O = nicotinate beta-D-ribonucleotide + ADP + phosphate + diphosphate. It participates in cofactor biosynthesis; NAD(+) biosynthesis; nicotinate D-ribonucleotide from nicotinate: step 1/1. Its function is as follows. Catalyzes the synthesis of beta-nicotinate D-ribonucleotide from nicotinate and 5-phospho-D-ribose 1-phosphate at the expense of ATP. The protein is Nicotinate phosphoribosyltransferase 1 of Pseudomonas aeruginosa (strain ATCC 15692 / DSM 22644 / CIP 104116 / JCM 14847 / LMG 12228 / 1C / PRS 101 / PAO1).